Here is a 137-residue protein sequence, read N- to C-terminus: Basic phospholipase A2 homolog bothropstoxin-I (137 aa).

Positions 1 to 16 (MRTLWIMAVLLVGVEG) are cleaved as a signal peptide. 7 disulfide bridges follow: C42–C131, C44–C60, C59–C111, C65–C137, C66–C104, C73–C97, and C91–C102. The segment at 121–133 (KKYRYHLKPFCKK) is important for membrane-damaging activities in eukaryotes and bacteria; heparin-binding.

Belongs to the phospholipase A2 family. Group II subfamily. K49 sub-subfamily. As to quaternary structure, homodimer; non-covalently linked (probable alternative/compact dimer conformation in solution). Binds to heparin. As to expression, expressed by the venom gland.

Its subcellular location is the secreted. Its activity is regulated as follows. Suramin inhibits both myotoxic and muscle-paralyzing activities. Chicoric acid inhibits myotoxic activity. Zinc ions inhibits the myotoxic activity and the neuromuscular blockade. Heparin inhibits myotoxic activity. In terms of biological role, snake venom phospholipase A2 homolog that lacks enzymatic activity. Shows local myotoxic activity. Induces inflammation, since it induces edema and leukocytes infiltration. In addition, it induces NLRP3 NLRP3, ASC (PYCARD), caspase-1 (CASP1), and IL-1beta (IL1B) gene expression in the gastrocnemius muscle, showing that it is able to activate NLRP3 inflammasome. It also damages artificial and myoblast membranes by a calcium-independent mechanism, has bactericidal activity, and induces neuromuscular blockade. A model of myotoxic mechanism has been proposed: an apo Lys49-PLA2 is activated by the entrance of a hydrophobic molecule (e.g. fatty acid) at the hydrophobic channel of the protein leading to a reorientation of a monomer. This reorientation causes a transition between 'inactive' to 'active' states, causing alignment of C-terminal and membrane-docking sites (MDoS) side-by-side and putting the membrane-disruption sites (MDiS) in the same plane, exposed to solvent and in a symmetric position for both monomers. The MDoS region stabilizes the toxin on membrane by the interaction of charged residues with phospholipid head groups. Subsequently, the MDiS region destabilizes the membrane with penetration of hydrophobic residues. This insertion causes a disorganization of the membrane, allowing an uncontrolled influx of ions (i.e. calcium and sodium), and eventually triggering irreversible intracellular alterations and cell death. This Bothrops jararacussu (Jararacussu) protein is Basic phospholipase A2 homolog bothropstoxin-I.